The primary structure comprises 389 residues: Lipid-A-disaccharide synthase (389 aa).

It belongs to the LpxB family.

The enzyme catalyses a lipid X + a UDP-2-N,3-O-bis[(3R)-3-hydroxyacyl]-alpha-D-glucosamine = a lipid A disaccharide + UDP + H(+). It participates in bacterial outer membrane biogenesis; LPS lipid A biosynthesis. In terms of biological role, condensation of UDP-2,3-diacylglucosamine and 2,3-diacylglucosamine-1-phosphate to form lipid A disaccharide, a precursor of lipid A, a phosphorylated glycolipid that anchors the lipopolysaccharide to the outer membrane of the cell. This is Lipid-A-disaccharide synthase from Albidiferax ferrireducens (strain ATCC BAA-621 / DSM 15236 / T118) (Rhodoferax ferrireducens).